Consider the following 316-residue polypeptide: Cytochrome c biogenesis protein CcsA (316 aa).

8 helical membrane-spanning segments follow: residues 19 to 39 (VLTL…FSFW), 47 to 67 (SSIV…QLVF), 77 to 97 (ISNL…IQLL), 106 to 126 (LIQA…SFVL), 151 to 171 (VIMC…VVLL), 224 to 244 (TITF…VWAN), 258 to 275 (TWAF…HTRL), and 285 to 305 (AIIA…VNFL).

Belongs to the CcmF/CycK/Ccl1/NrfE/CcsA family. May interact with ccs1.

The protein localises to the cellular thylakoid membrane. Functionally, required during biogenesis of c-type cytochromes (cytochrome c6 and cytochrome f) at the step of heme attachment. The protein is Cytochrome c biogenesis protein CcsA of Prochlorococcus marinus (strain SARG / CCMP1375 / SS120).